We begin with the raw amino-acid sequence, 609 residues long: Glutamine--fructose-6-phosphate aminotransferase [isomerizing] (609 aa).

Cys2 functions as the Nucleophile; for GATase activity in the catalytic mechanism. Residues 2–217 form the Glutamine amidotransferase type-2 domain; it reads CGIVGAIAGR…DGDTAEIRRD (216 aa). SIS domains follow at residues 285–425 and 458–599; these read AESV…LRGA and WAEC…VDKP. The active-site For Fru-6P isomerization activity is Lys604.

As to quaternary structure, homodimer.

The protein localises to the cytoplasm. The enzyme catalyses D-fructose 6-phosphate + L-glutamine = D-glucosamine 6-phosphate + L-glutamate. Its function is as follows. Catalyzes the first step in hexosamine metabolism, converting fructose-6P into glucosamine-6P using glutamine as a nitrogen source. This is Glutamine--fructose-6-phosphate aminotransferase [isomerizing] from Xylella fastidiosa (strain 9a5c).